The sequence spans 542 residues: NXPE family member 4 (542 aa).

The first 26 residues, 1–26 (MKMMASRKSLWVLLFIVIFWISFTVF), serve as a signal peptide directing secretion. 4 N-linked (GlcNAc...) asparagine glycosylation sites follow: N91, N92, N159, and N223.

The protein belongs to the NXPE family.

Its subcellular location is the secreted. The sequence is that of NXPE family member 4 (Nxpe4) from Rattus norvegicus (Rat).